Consider the following 346-residue polypeptide: NADH-cytochrome b5 reductase 2 (346 aa).

Residues 28 to 50 (GGSNAALYAGLAAAAGAGAYYFL) form a helical membrane-spanning segment. One can recognise an FAD-binding FR-type domain in the interval 95 to 200 (QGFISLKLDS…KGPIPKYPWS (106 aa)). 203-238 (KHDHIALIAGGTGITPMYQLARAIFNNPADKTKVTL) serves as a coordination point for FAD.

The protein belongs to the flavoprotein pyridine nucleotide cytochrome reductase family. FAD is required as a cofactor.

The protein resides in the mitochondrion outer membrane. The enzyme catalyses 2 Fe(III)-[cytochrome b5] + NADH = 2 Fe(II)-[cytochrome b5] + NAD(+) + H(+). May mediate the reduction of outer membrane cytochrome b5. This chain is NADH-cytochrome b5 reductase 2 (mcr1), found in Botryotinia fuckeliana (strain B05.10) (Noble rot fungus).